The sequence spans 84 residues: Esculentin-1Vb (84 aa).

The N-terminal stretch at 1–22 (MFTLKKPLLLIVLLGIISLSLC) is a signal peptide. Residues 23-36 (EQERNADEDEESET) constitute a propeptide that is removed on maturation. A disulfide bond links Cys78 and Cys84.

In terms of tissue distribution, expressed by the skin glands.

The protein resides in the secreted. In terms of biological role, antimicrobial peptide. This Odorrana versabilis (Chinese bamboo leaf odorous frog) protein is Esculentin-1Vb.